The following is a 181-amino-acid chain: Bifunctional protein PyrR (181 aa).

A PRPP-binding motif is present at residues 101–113; that stretch reads VIVVDDVLYTGRT.

This sequence belongs to the purine/pyrimidine phosphoribosyltransferase family. PyrR subfamily. In terms of assembly, homodimer and homohexamer; in equilibrium.

The enzyme catalyses UMP + diphosphate = 5-phospho-alpha-D-ribose 1-diphosphate + uracil. Its function is as follows. Regulates transcriptional attenuation of the pyrimidine nucleotide (pyr) operon by binding in a uridine-dependent manner to specific sites on pyr mRNA. This disrupts an antiterminator hairpin in the RNA and favors formation of a downstream transcription terminator, leading to a reduced expression of downstream genes. Also displays a weak uracil phosphoribosyltransferase activity which is not physiologically significant. The polypeptide is Bifunctional protein PyrR (Bacillus velezensis (strain DSM 23117 / BGSC 10A6 / LMG 26770 / FZB42) (Bacillus amyloliquefaciens subsp. plantarum)).